We begin with the raw amino-acid sequence, 278 residues long: HTH-type transcriptional regulator HdfR (278 aa).

The 58-residue stretch at 1 to 58 folds into the HTH lysR-type domain; the sequence is MDTELLKTFLEVSRTRHFGRAAEALYLTQSAVSFRIRQLENQLGVNLFTRHRNNIRLT. The segment at residues 18–37 is a DNA-binding region (H-T-H motif); the sequence is FGRAAEALYLTQSAVSFRIR.

The protein belongs to the LysR transcriptional regulatory family.

Negatively regulates the transcription of the flagellar master operon flhDC by binding to the upstream region of the operon. The sequence is that of HTH-type transcriptional regulator HdfR from Salmonella schwarzengrund (strain CVM19633).